A 404-amino-acid chain; its full sequence is Glycosylated lysosomal membrane protein (404 aa).

The signal sequence occupies residues 1-35 (MRGSVERGWGWGHCASSPLLLWTLLLFAAPFGLLG). The Lumenal portion of the chain corresponds to 36–371 (EKTRQLSLEV…GRLVPTSPGH (336 aa)). N-linked (GlcNAc...) asparagine glycans are attached at residues Asn-65, Asn-134, Asn-159, Asn-186, and Asn-229. Residues 372–392 (HGSALGAPGLMLLGGGLVLLL) traverse the membrane as a helical segment. Topologically, residues 393–404 (HHRKYSEYQSIN) are cytoplasmic. The short motif at 400–404 (YQSIN) is the Lysosomal targeting motif element.

It belongs to the GLMP family. As to quaternary structure, interacts (via lumenal domain) with lysosomal protein MFSD1; the interaction starts while both proteins are still in the endoplasmic reticulum and is required for stabilization of MFSD1 in lysosomes but has no direct effect on its targeting to lysosomes or transporter activity. Highly N-glycosylated. N-glycosylation is essential for GLMP stability and for MFSD1 lysosomal localization.

It localises to the lysosome membrane. Its function is as follows. Required to protect lysosomal transporter MFSD1 from lysosomal proteolysis and for MFSD1 lysosomal localization. This Pongo abelii (Sumatran orangutan) protein is Glycosylated lysosomal membrane protein.